A 475-amino-acid polypeptide reads, in one-letter code: Eukaryotic translation initiation factor 2 subunit 3 (475 aa).

Residues 38–247 (QATINIGTIG…IVNKIPVPPR (210 aa)) form the tr-type G domain. A G1 region spans residues 47–54 (GHVAHGKS). 50 to 55 (AHGKST) serves as a coordination point for GTP. The tract at residues 75-79 (NITIK) is G2. Residues 133 to 136 (DCPG) are G3. GTP-binding positions include 189–192 (NKID) and 224–226 (SAQ). The G4 stretch occupies residues 189–192 (NKID). A G5 region spans residues 224-226 (SAQ). An interacts with CDC123 region spans residues 456–468 (GQIFGGKTITPVL).

This sequence belongs to the TRAFAC class translation factor GTPase superfamily. Classic translation factor GTPase family. EIF2G subfamily. Eukaryotic translation initiation factor 2 eIF2 is a heterotrimeric complex composed of an alpha, a beta and a gamma subunit. The factors eIF-1, eIF-2, eIF-3, TIF5/eIF-5 and methionyl-tRNAi form a multifactor complex (MFC) that may bind to the 40S ribosome.

The protein localises to the cytoplasm. The protein resides in the cytosol. It carries out the reaction GTP + H2O = GDP + phosphate + H(+). As a subunit of eukaryotic initiation factor 2 eIF2, involved in the early steps of protein synthesis. In the presence of GTP, eIF-2 forms a ternary complex with initiator tRNA Met-tRNAi and then recruits the 40S ribosomal complex and initiation factors eIF-1, eIF-1A and eIF-3 to form the 43S pre-initiation complex (43S PIC), a step that determines the rate of protein translation. The 43S PIC binds to mRNA and scans downstream to the initiation codon, where it forms a 48S initiation complex by codon-anticodon base pairing. This leads to the displacement of eIF-1 to allow GTPase-activating protein (GAP) eIF-5-mediated hydrolysis of eIF2-bound GTP. Hydrolysis of GTP and release of Pi, which makes GTP hydrolysis irreversible, causes the release of the eIF-2-GDP binary complex from the 40S subunit, an event that is essential for the subsequent joining of the 60S ribosomal subunit to form an elongation-competent 80S ribosome. In order for eIF-2 to recycle and catalyze another round of initiation, the GDP bound to eIF-2 must be exchanged with GTP by way of a reaction catalyzed by GDP-GTP exchange factor (GEF) eIF-2B. This Drosophila melanogaster (Fruit fly) protein is Eukaryotic translation initiation factor 2 subunit 3.